The sequence spans 267 residues: Indole-3-glycerol phosphate synthase (267 aa).

This sequence belongs to the TrpC family.

It catalyses the reaction 1-(2-carboxyphenylamino)-1-deoxy-D-ribulose 5-phosphate + H(+) = (1S,2R)-1-C-(indol-3-yl)glycerol 3-phosphate + CO2 + H2O. The protein operates within amino-acid biosynthesis; L-tryptophan biosynthesis; L-tryptophan from chorismate: step 4/5. This is Indole-3-glycerol phosphate synthase from Cupriavidus necator (strain ATCC 17699 / DSM 428 / KCTC 22496 / NCIMB 10442 / H16 / Stanier 337) (Ralstonia eutropha).